Consider the following 144-residue polypeptide: Large ribosomal subunit protein uL15 (144 aa).

The span at 1 to 13 (MVRERTKKLRGGH) shows a compositional bias: basic residues. Residues 1 to 32 (MVRERTKKLRGGHYGRGFKAGRGKGKKGGSGN) are disordered.

Belongs to the universal ribosomal protein uL15 family. As to quaternary structure, part of the 50S ribosomal subunit.

Its function is as follows. Binds to the 23S rRNA. The sequence is that of Large ribosomal subunit protein uL15 from Thermoplasma acidophilum (strain ATCC 25905 / DSM 1728 / JCM 9062 / NBRC 15155 / AMRC-C165).